The following is an 87-amino-acid chain: Cell division topological specificity factor (87 aa).

The protein belongs to the MinE family.

Prevents the cell division inhibition by proteins MinC and MinD at internal division sites while permitting inhibition at polar sites. This ensures cell division at the proper site by restricting the formation of a division septum at the midpoint of the long axis of the cell. The sequence is that of Cell division topological specificity factor from Vibrio vulnificus (strain CMCP6).